Reading from the N-terminus, the 369-residue chain is MNASQRVRVAVVFGGRSNEHAISCVSAGSILRNLDPRRFEVVAIGITPQGSWVLTDGDPAALAISDRQLPEVTSASGTELALPADPGRSGQLVSLPPGASEVLASVDVVFPVLHGPYGEDGTIQGLLELAGVPYVGAGVFASAAGMDKEFTKKLFAAEGLPIGDYAVLRPSQSTLSLQDRERLGLPVFVKPARGGSSIGVSRVSSWDELDAAVAAARDHDPKVIVEAAIAGRELECGVLEMPDGTVQASTVGEIRVAGVRGREDSFYDFATKYLDDTAELDVPAKVDDEIADAVRELAIRAFKAVDCQGLARVDFFLTETGPVLNEINTMPGFTTISMYPRMWAASGVDYPSLLATMVETALARGVGLR.

In terms of domain architecture, ATP-grasp spans 152–359; sequence KKLFAAEGLP…YPSLLATMVE (208 aa). 180–235 lines the ATP pocket; that stretch reads RERLGLPVFVKPARGGSSIGVSRVSSWDELDAAVAAARDHDPKVIVEAAIAGRELE. Aspartate 314, glutamate 326, and asparagine 328 together coordinate Mg(2+).

This sequence belongs to the D-alanine--D-alanine ligase family. Requires Mg(2+) as cofactor. Mn(2+) serves as cofactor.

The protein resides in the cytoplasm. The enzyme catalyses 2 D-alanine + ATP = D-alanyl-D-alanine + ADP + phosphate + H(+). It participates in cell wall biogenesis; peptidoglycan biosynthesis. Cell wall formation. The sequence is that of D-alanine--D-alanine ligase from Mycolicibacterium paratuberculosis (strain ATCC BAA-968 / K-10) (Mycobacterium paratuberculosis).